A 454-amino-acid polypeptide reads, in one-letter code: Adenylosuccinate synthetase isozyme 1 B (454 aa).

Residues 1-24 (MSGTRASNDRSSHPGAGGHKRPRY) are disordered. Residues 39–45 (GDEGKGK) and 67–69 (GHT) each bind GTP. The active-site Proton acceptor is the D40. Mg(2+) contacts are provided by D40 and G67. D40 is a substrate binding site. Residues 40–43 (DEGK), 65–68 (NAGH), T160, R174, N253, T268, and R332 each bind IMP. The active-site Proton donor is the H68. 328–334 (VTTGRKR) serves as a coordination point for substrate. Residues R334, 360 to 362 (KLD), and 442 to 445 (GVGK) each bind GTP.

It belongs to the adenylosuccinate synthetase family. As to quaternary structure, homodimer. The cofactor is Mg(2+).

The protein resides in the cytoplasm. It catalyses the reaction IMP + L-aspartate + GTP = N(6)-(1,2-dicarboxyethyl)-AMP + GDP + phosphate + 2 H(+). It functions in the pathway purine metabolism; AMP biosynthesis via de novo pathway; AMP from IMP: step 1/2. Functionally, component of the purine nucleotide cycle (PNC), which interconverts IMP and AMP to regulate the nucleotide levels in various tissues, and which contributes to glycolysis and ammoniagenesis. Catalyzes the first committed step in the biosynthesis of AMP from IMP. The polypeptide is Adenylosuccinate synthetase isozyme 1 B (adss1-b) (Xenopus laevis (African clawed frog)).